The sequence spans 525 residues: Membrane-bound lytic murein transglycosylase F (525 aa).

The signal sequence occupies residues 1–24 (MQIRHFNRLKRSVLLFASVLLLSA). Residues 25 to 284 (CQIESQPKSE…SLEEKYIGHI (260 aa)) form a non-LT domain region. Residues 286-525 (AFDYVDTRAF…VDEDLDQEEE (240 aa)) are LT domain. The active site involves E329. The tract at residues 506 to 525 (VSGASDITNEVDEDLDQEEE) is disordered. Residues 514–525 (NEVDEDLDQEEE) show a composition bias toward acidic residues.

It in the N-terminal section; belongs to the bacterial solute-binding protein 3 family. This sequence in the C-terminal section; belongs to the transglycosylase Slt family.

It localises to the cell outer membrane. It catalyses the reaction Exolytic cleavage of the (1-&gt;4)-beta-glycosidic linkage between N-acetylmuramic acid (MurNAc) and N-acetylglucosamine (GlcNAc) residues in peptidoglycan, from either the reducing or the non-reducing ends of the peptidoglycan chains, with concomitant formation of a 1,6-anhydrobond in the MurNAc residue.. In terms of biological role, murein-degrading enzyme that degrades murein glycan strands and insoluble, high-molecular weight murein sacculi, with the concomitant formation of a 1,6-anhydromuramoyl product. Lytic transglycosylases (LTs) play an integral role in the metabolism of the peptidoglycan (PG) sacculus. Their lytic action creates space within the PG sacculus to allow for its expansion as well as for the insertion of various structures such as secretion systems and flagella. The sequence is that of Membrane-bound lytic murein transglycosylase F from Vibrio parahaemolyticus serotype O3:K6 (strain RIMD 2210633).